A 555-amino-acid chain; its full sequence is GPI-anchor transamidase component PIGS (555 aa).

The Cytoplasmic segment spans residues 2–18 (AATGAAATDLEVVRGKR). A cardiolipin contacts are provided by R15 and R18. The helical transmembrane segment at 19–39 (AALFFATVVIVLGLPLWWKTT) threads the bilayer. Residues 40 to 517 (ETYRAPLPYS…LHLLYFPDDQ (478 aa)) lie on the Lumenal side of the membrane. N267 and N370 each carry an N-linked (GlcNAc...) asparagine glycan. A helical transmembrane segment spans residues 518–532 (KFAIYIPLFLPMAVP). The Cytoplasmic segment spans residues 533 to 555 (ILLSLFKIFLETRKSWKKPEKTD).

Belongs to the PIGS family. As to quaternary structure, heteropentamer. Part of the GPI-anchor transamidase complex, consisting of PIGK, PIGT, PIGS, PIGU and GAA1.

It is found in the endoplasmic reticulum membrane. It functions in the pathway glycolipid biosynthesis; glycosylphosphatidylinositol-anchor biosynthesis. Functionally, component of the glycosylphosphatidylinositol-anchor (GPI-anchor) transamidase (GPI-T) complex that catalyzes the formation of the linkage between a proprotein and a GPI-anchor and participates in GPI anchored protein biosynthesis. The polypeptide is GPI-anchor transamidase component PIGS (Bos taurus (Bovine)).